A 463-amino-acid polypeptide reads, in one-letter code: Nuclear hormone receptor family member nhr-3 (463 aa).

A DNA-binding region (nuclear receptor) is located at residues 50–125 (STICSVCCDE…VGMEPDAIRP (76 aa)). NR C4-type zinc fingers lie at residues 53–73 (CSVC…CFGC) and 89–113 (CRYS…FQKC). Over residues 121 to 131 (DAIRPDRDKTG) the composition is skewed to basic and acidic residues. Positions 121–143 (DAIRPDRDKTGRQKNPRRNTEGS) are disordered. Residues 199–462 (EIENIVIQLQ…VLEELLFLDR (264 aa)) form the NR LBD domain.

Belongs to the nuclear hormone receptor family.

It is found in the nucleus. Functionally, orphan nuclear receptor. The chain is Nuclear hormone receptor family member nhr-3 (nhr-3) from Caenorhabditis elegans.